Consider the following 399-residue polypeptide: uncharacterized protein (399 aa).

Residues 375–399 (AAGGHRGSHGKSEQAATVRVVDDRR) form a disordered region.

Belongs to the mycobacterial PPE family.

This is an uncharacterized protein from Mycobacterium tuberculosis (strain ATCC 25618 / H37Rv).